We begin with the raw amino-acid sequence, 626 residues long: Polypeptide N-acetylgalactosaminyltransferase 5 (626 aa).

The Cytoplasmic portion of the chain corresponds to 1-11 (MIIFKKKAILK). A helical; Signal-anchor for type II membrane protein membrane pass occupies residues 12–31 (VLLLVPVFWICSLIFFAATS). An N-linked (GlcNAc...) asparagine glycan is attached at Asn32. The Lumenal portion of the chain corresponds to 32-626 (NDSSQIGSNN…AIEHGAKPPS (595 aa)). Disulfide bonds link Cys165–Cys399, Cys390–Cys466, Cys502–Cys521, Cys544–Cys557, and Cys583–Cys598. The catalytic subdomain A stretch occupies residues 174–284 (LPRTSVIICF…EGWMEPLLDR (111 aa)). The substrate site is built by Asp215 and Arg245. Asp268 contributes to the Mn(2+) binding site. Ser269 serves as a coordination point for substrate. His270 provides a ligand contact to Mn(2+). Residue Asn338 is glycosylated (N-linked (GlcNAc...) asparagine). Positions 345–407 (PVRSPTMAGG…PCSHVGHVFR (63 aa)) are catalytic subdomain B. Trp376 serves as a coordination point for substrate. His404 provides a ligand contact to Mn(2+). Residues Arg407 and Tyr412 each coordinate substrate. Residues 488 to 610 (AKGEVRNSAV…DDPYQHWKFK (123 aa)) form the Ricin B-type lectin domain.

This sequence belongs to the glycosyltransferase 2 family. GalNAc-T subfamily. Mn(2+) serves as cofactor.

It is found in the golgi apparatus membrane. It carries out the reaction L-seryl-[protein] + UDP-N-acetyl-alpha-D-galactosamine = a 3-O-[N-acetyl-alpha-D-galactosaminyl]-L-seryl-[protein] + UDP + H(+). The catalysed reaction is L-threonyl-[protein] + UDP-N-acetyl-alpha-D-galactosamine = a 3-O-[N-acetyl-alpha-D-galactosaminyl]-L-threonyl-[protein] + UDP + H(+). The protein operates within protein modification; protein glycosylation. Catalyzes the initial reaction in O-linked oligosaccharide biosynthesis, the transfer of an N-acetyl-D-galactosamine residue to a serine or threonine residue on the protein receptor. This is Polypeptide N-acetylgalactosaminyltransferase 5 (gly-5) from Caenorhabditis elegans.